Here is a 292-residue protein sequence, read N- to C-terminus: MAQEDVGHLSDAGLALGLSLGGGGGGTTDAAAAHRGGCRRPSPSSQCPPLEPSLTLSLPDDAAAGAAATATATASGGGGPAHSVSSLSVGAAAAAAVKRERAEEADGERVSSTAAGRDDDDDGSTRKKLRLTKEQSALLEDRFREHSTLNPKQKVALAKQLNLRPRQVEVWFQNRRARTKLKQTEVDCEFLKRCCETLTEENRRLQRELQELRALKFAPPPPSSAAHQPSPAPPAPFYMQLPAATLTICPSCERVGGPASAAKVVAADGTKAGPGRTTTHHFFNPFTHSAAC.

3 disordered regions span residues 14-85 (LALG…HSVS), 99-133 (RERA…RLTK), and 217-236 (FAPP…PPAP). A compositionally biased stretch (low complexity) spans 28-74 (TDAAAAHRGGCRRPSPSSQCPPLEPSLTLSLPDDAAAGAAATATATA). Residues 99-109 (RERAEEADGER) are compositionally biased toward basic and acidic residues. Positions 124–183 (STRKKLRLTKEQSALLEDRFREHSTLNPKQKVALAKQLNLRPRQVEVWFQNRRARTKLKQ) form a DNA-binding region, homeobox. The leucine-zipper stretch occupies residues 182 to 226 (KQTEVDCEFLKRCCETLTEENRRLQRELQELRALKFAPPPPSSAA).

This sequence belongs to the HD-ZIP homeobox family. Class II subfamily. In terms of tissue distribution, expressed in seedlings, roots, stems, leaf sheaths and blades and panicles.

The protein localises to the nucleus. Probable transcription factor. The protein is Homeobox-leucine zipper protein HOX19 (HOX19) of Oryza sativa subsp. japonica (Rice).